The primary structure comprises 138 residues: Large ribosomal subunit protein uL16c (138 aa).

The protein belongs to the universal ribosomal protein uL16 family. In terms of assembly, part of the 50S ribosomal subunit.

The protein localises to the plastid. The protein resides in the chloroplast. The protein is Large ribosomal subunit protein uL16c of Tetradesmus obliquus (Green alga).